Here is a 325-residue protein sequence, read N- to C-terminus: Short chain isoprenyl diphosphate synthase (325 aa).

Isopentenyl diphosphate is bound by residues K44, R47, and H76. Positions 83 and 87 each coordinate Mg(2+). An an all-trans-polyprenyl diphosphate-binding site is contributed by R92. Position 93 (R93) interacts with isopentenyl diphosphate. 5 residues coordinate an all-trans-polyprenyl diphosphate: K173, T174, Q211, K228, and K238.

It belongs to the FPP/GGPP synthase family. Homodimer. It depends on Mg(2+) as a cofactor.

The protein localises to the cytoplasm. The protein is Short chain isoprenyl diphosphate synthase (idsA) of Methanothermobacter thermautotrophicus (strain ATCC 29096 / DSM 1053 / JCM 10044 / NBRC 100330 / Delta H) (Methanobacterium thermoautotrophicum).